The chain runs to 441 residues: Growth/differentiation factor 9 (441 aa).

Positions 1-29 are cleaved as a signal peptide; sequence MALPSNFLLGVCCFAWLCFLSSLSSQAST. Residues 30-306 constitute a propeptide that is removed on maturation; the sequence is EESQSGASEN…EVERSPRRRR (277 aa). N-linked (GlcNAc...) asparagine glycosylation is found at N163, N229, N258, and N325. Cystine bridges form between C340/C406, C369/C438, and C373/C440.

This sequence belongs to the TGF-beta family. In terms of assembly, homodimer or heterodimer (Potential). But, in contrast to other members of this family, cannot be disulfide-linked. Phosphorylated; phosphorylation is critical for GDF9 function. As to expression, ovary. Strongly expressed in germinal vesicle (GV) stage oocytes, MII-stage oocytes and in zygotes.

The protein resides in the secreted. Functionally, required for ovarian folliculogenesis. This is Growth/differentiation factor 9 (Gdf9) from Mus musculus (Mouse).